A 444-amino-acid chain; its full sequence is N-succinylarginine dihydrolase (444 aa).

Substrate-binding positions include 19–28 (AGLSFGNVAS), Asn-110, and 137–138 (HR). Residue Glu-174 is part of the active site. Residue Arg-214 participates in substrate binding. Residue His-250 is part of the active site. Residues Asp-252 and Asn-362 each contribute to the substrate site. The Nucleophile role is filled by Cys-368.

The protein belongs to the succinylarginine dihydrolase family. Homodimer.

The enzyme catalyses N(2)-succinyl-L-arginine + 2 H2O + 2 H(+) = N(2)-succinyl-L-ornithine + 2 NH4(+) + CO2. Its pathway is amino-acid degradation; L-arginine degradation via AST pathway; L-glutamate and succinate from L-arginine: step 2/5. Its function is as follows. Catalyzes the hydrolysis of N(2)-succinylarginine into N(2)-succinylornithine, ammonia and CO(2). The chain is N-succinylarginine dihydrolase from Shewanella baltica (strain OS223).